A 536-amino-acid chain; its full sequence is Apolipoprotein N-acyltransferase (536 aa).

Helical transmembrane passes span 34–54 (PLWW…RPGA), 64–84 (ALIG…WLFI), 89–109 (YGAL…AFLA), 129–149 (GAAL…GSLW), 172–192 (YVGV…CVQW), and 199–219 (HWPM…AAVQ). Residues 244 to 487 (LQGNIAQDEK…RGVLRGQVHG (244 aa)) form the CN hydrolase domain. Glu-283 serves as the catalytic Proton acceptor. Lys-345 is an active-site residue. Cys-395 functions as the Nucleophile in the catalytic mechanism. The helical transmembrane segment at 503–523 (WWVARWGLWPLWALAALALAW) threads the bilayer.

Belongs to the CN hydrolase family. Apolipoprotein N-acyltransferase subfamily.

It localises to the cell inner membrane. The catalysed reaction is N-terminal S-1,2-diacyl-sn-glyceryl-L-cysteinyl-[lipoprotein] + a glycerophospholipid = N-acyl-S-1,2-diacyl-sn-glyceryl-L-cysteinyl-[lipoprotein] + a 2-acyl-sn-glycero-3-phospholipid + H(+). The protein operates within protein modification; lipoprotein biosynthesis (N-acyl transfer). Functionally, catalyzes the phospholipid dependent N-acylation of the N-terminal cysteine of apolipoprotein, the last step in lipoprotein maturation. The sequence is that of Apolipoprotein N-acyltransferase from Verminephrobacter eiseniae (strain EF01-2).